A 202-amino-acid polypeptide reads, in one-letter code: Holliday junction resolvase RecU (202 aa).

Residues Thr-85, Asp-87, Glu-100, and Gln-119 each coordinate Mg(2+).

The protein belongs to the RecU family. Requires Mg(2+) as cofactor.

It localises to the cytoplasm. The catalysed reaction is Endonucleolytic cleavage at a junction such as a reciprocal single-stranded crossover between two homologous DNA duplexes (Holliday junction).. Endonuclease that resolves Holliday junction intermediates in genetic recombination. Cleaves mobile four-strand junctions by introducing symmetrical nicks in paired strands. Promotes annealing of linear ssDNA with homologous dsDNA. Required for DNA repair, homologous recombination and chromosome segregation. The protein is Holliday junction resolvase RecU of Streptococcus equi subsp. equi (strain 4047).